The following is a 72-amino-acid chain: Heat-stable enterotoxin A2 (72 aa).

A signal peptide spans 1 to 19 (MKKSILFIFLSVLSFSPFA). Positions 20 to 53 (QDAKPAGSSKEKITLESKKCNIVKKNNESSPESM) are excised as a propeptide. 3 disulfides stabilise this stretch: cysteine 59–cysteine 64, cysteine 60–cysteine 68, and cysteine 63–cysteine 71.

This sequence belongs to the heat-stable enterotoxin family.

The protein localises to the secreted. Functionally, toxin which activates the particulate form of guanylate cyclase and increases cyclic GMP levels within the host intestinal epithelial cells. The protein is Heat-stable enterotoxin A2 (sta2) of Escherichia coli.